The following is a 195-amino-acid chain: Pyridoxal 5'-phosphate synthase subunit PdxT (195 aa).

Gly46–Ser48 contacts L-glutamine. Cys78 functions as the Nucleophile in the catalytic mechanism. L-glutamine is bound by residues Arg107 and Ile136–Arg137. Residues His173 and Glu175 each act as charge relay system in the active site.

The protein belongs to the glutaminase PdxT/SNO family. In terms of assembly, in the presence of PdxS, forms a dodecamer of heterodimers. Only shows activity in the heterodimer.

The enzyme catalyses aldehydo-D-ribose 5-phosphate + D-glyceraldehyde 3-phosphate + L-glutamine = pyridoxal 5'-phosphate + L-glutamate + phosphate + 3 H2O + H(+). It catalyses the reaction L-glutamine + H2O = L-glutamate + NH4(+). The protein operates within cofactor biosynthesis; pyridoxal 5'-phosphate biosynthesis. Its function is as follows. Catalyzes the hydrolysis of glutamine to glutamate and ammonia as part of the biosynthesis of pyridoxal 5'-phosphate. The resulting ammonia molecule is channeled to the active site of PdxS. This chain is Pyridoxal 5'-phosphate synthase subunit PdxT, found in Dehalococcoides mccartyi (strain CBDB1).